We begin with the raw amino-acid sequence, 299 residues long: ATP phosphoribosyltransferase (299 aa).

It belongs to the ATP phosphoribosyltransferase family. Long subfamily. In terms of assembly, equilibrium between an active dimeric form, an inactive hexameric form and higher aggregates. Interconversion between the various forms is largely reversible and is influenced by the natural substrates and inhibitors of the enzyme. Mg(2+) is required as a cofactor.

The protein localises to the cytoplasm. The catalysed reaction is 1-(5-phospho-beta-D-ribosyl)-ATP + diphosphate = 5-phospho-alpha-D-ribose 1-diphosphate + ATP. It participates in amino-acid biosynthesis; L-histidine biosynthesis; L-histidine from 5-phospho-alpha-D-ribose 1-diphosphate: step 1/9. With respect to regulation, feedback inhibited by histidine. Its function is as follows. Catalyzes the condensation of ATP and 5-phosphoribose 1-diphosphate to form N'-(5'-phosphoribosyl)-ATP (PR-ATP). Has a crucial role in the pathway because the rate of histidine biosynthesis seems to be controlled primarily by regulation of HisG enzymatic activity. The sequence is that of ATP phosphoribosyltransferase from Proteus mirabilis (strain HI4320).